The sequence spans 380 residues: Protein arginine N-methyltransferase PRMT10 (380 aa).

An SAM-dependent MTase PRMT-type domain is found at 26–357 (EVDFANYFCT…KENHRLMDME (332 aa)). 5 residues coordinate S-adenosyl-L-methionine: glutamine 42, arginine 51, glycine 75, glutamate 97, and glutamate 126. Catalysis depends on residues glutamate 140 and glutamate 149. Residues 187 to 227 (ENKMEDLEIAMHDWNLFVEDTESYYGVNMNVLTKAYRAEHE) form a dimerization arm region.

It belongs to the class I-like SAM-binding methyltransferase superfamily. Protein arginine N-methyltransferase family. As to quaternary structure, ring-like homodimer.

It catalyses the reaction L-arginyl-[protein] + 2 S-adenosyl-L-methionine = N(omega),N(omega)-dimethyl-L-arginyl-[protein] + 2 S-adenosyl-L-homocysteine + 2 H(+). Functionally, methylates (mono and asymmetric dimethylation) the guanidino nitrogens of arginyl residues in some proteins. The polypeptide is Protein arginine N-methyltransferase PRMT10 (PRMT10) (Oryza sativa subsp. japonica (Rice)).